The primary structure comprises 86 residues: UPF0437 protein Ava_4254 (86 aa).

This sequence belongs to the UPF0437 family.

The protein is UPF0437 protein Ava_4254 of Trichormus variabilis (strain ATCC 29413 / PCC 7937) (Anabaena variabilis).